A 305-amino-acid chain; its full sequence is Putative E3 ubiquitin-protein ligase SINAT1 (305 aa).

Residues 57 to 93 form an RING-type zinc finger; that stretch reads CPVCTNLMYPPIHQCPNGHTLCSSCKLRVQNTCPTCR. Residues 107-300 form an SBD region; it reads VAESLEVPCR…EELKLRVTGR (194 aa). The SIAH-type zinc finger occupies 110-170; that stretch reads SLEVPCRYQN…LVDHLKDDHK (61 aa). Zn(2+) is bound by residues Cys115, Cys122, His134, Cys138, Cys145, Cys152, His164, and His169.

Belongs to the SINA (Seven in absentia) family. In terms of assembly, interacts with SINAT6. Interacts with ATG6 and TRAF1A. Interacts with WAV3. Interacts with FREE1. Interacts with ELC/VPS23A.

It localises to the endosome. It is found in the multivesicular body. The protein localises to the cytoplasmic vesicle. Its subcellular location is the autophagosome. The enzyme catalyses S-ubiquitinyl-[E2 ubiquitin-conjugating enzyme]-L-cysteine + [acceptor protein]-L-lysine = [E2 ubiquitin-conjugating enzyme]-L-cysteine + N(6)-ubiquitinyl-[acceptor protein]-L-lysine.. The protein operates within protein modification; protein ubiquitination. E3 ubiquitin-protein ligase that mediates ubiquitination and subsequent proteasomal degradation of target proteins. E3 ubiquitin ligases accept ubiquitin from an E2 ubiquitin-conjugating enzyme in the form of a thioester and then directly transfers the ubiquitin to targeted substrates. It probably triggers the ubiquitin-mediated degradation of different substrates. Mediates the proteasomal-dependent degradation of ATG6, a component of the autophagosome complex. Requires TRAF1A/MUSE14 and TRAF1B/MUSE13 to target ATG6 for ubiquitination and subsequent regulation of autophagosome assembly. Modulates directly the ubiquitination and proteasomal-dependent degradation of FREE1, a component of the ESCRT-I complex. Modulates directly the ubiquitination and proteasomal-dependent degradation of ELC/VPS23A, a component of the ESCRT-I complex. This chain is Putative E3 ubiquitin-protein ligase SINAT1, found in Arabidopsis thaliana (Mouse-ear cress).